The primary structure comprises 455 residues: tRNA modification GTPase MnmE (455 aa).

Residues Lys29, Glu91, and Arg131 each contribute to the (6S)-5-formyl-5,6,7,8-tetrahydrofolate site. In terms of domain architecture, TrmE-type G spans 226 to 378 (GLKVALVGLP…LIQELLKLAG (153 aa)). Asn236 serves as a coordination point for K(+). Residues 236 to 241 (NVGKSS), 255 to 261 (TDLPGTT), 280 to 283 (DTAG), and 341 to 344 (NKAD) contribute to the GTP site. Ser240 contacts Mg(2+). K(+) is bound by residues Thr255, Leu257, and Thr260. Residue Thr261 coordinates Mg(2+). Residue Lys455 participates in (6S)-5-formyl-5,6,7,8-tetrahydrofolate binding.

It belongs to the TRAFAC class TrmE-Era-EngA-EngB-Septin-like GTPase superfamily. TrmE GTPase family. As to quaternary structure, homodimer. Heterotetramer of two MnmE and two MnmG subunits. K(+) is required as a cofactor.

It is found in the cytoplasm. Exhibits a very high intrinsic GTPase hydrolysis rate. Involved in the addition of a carboxymethylaminomethyl (cmnm) group at the wobble position (U34) of certain tRNAs, forming tRNA-cmnm(5)s(2)U34. This is tRNA modification GTPase MnmE from Prochlorococcus marinus (strain SARG / CCMP1375 / SS120).